A 248-amino-acid chain; its full sequence is 4-hydroxy-tetrahydrodipicolinate reductase (248 aa).

Residues 74-76 (GTT) and 99-102 (SANF) each bind NAD(+). His134 acts as the Proton donor/acceptor in catalysis. His135 contributes to the (S)-2,3,4,5-tetrahydrodipicolinate binding site. The active-site Proton donor is Lys138. 144 to 145 (GT) lines the (S)-2,3,4,5-tetrahydrodipicolinate pocket.

Belongs to the DapB family.

The protein resides in the cytoplasm. The catalysed reaction is (S)-2,3,4,5-tetrahydrodipicolinate + NAD(+) + H2O = (2S,4S)-4-hydroxy-2,3,4,5-tetrahydrodipicolinate + NADH + H(+). It carries out the reaction (S)-2,3,4,5-tetrahydrodipicolinate + NADP(+) + H2O = (2S,4S)-4-hydroxy-2,3,4,5-tetrahydrodipicolinate + NADPH + H(+). It participates in amino-acid biosynthesis; L-lysine biosynthesis via DAP pathway; (S)-tetrahydrodipicolinate from L-aspartate: step 4/4. Its function is as follows. Catalyzes the conversion of 4-hydroxy-tetrahydrodipicolinate (HTPA) to tetrahydrodipicolinate. In Chlorobium phaeobacteroides (strain BS1), this protein is 4-hydroxy-tetrahydrodipicolinate reductase.